A 249-amino-acid polypeptide reads, in one-letter code: Aspartate/glutamate leucyltransferase (249 aa).

It belongs to the R-transferase family. Bpt subfamily.

It is found in the cytoplasm. It catalyses the reaction N-terminal L-glutamyl-[protein] + L-leucyl-tRNA(Leu) = N-terminal L-leucyl-L-glutamyl-[protein] + tRNA(Leu) + H(+). The catalysed reaction is N-terminal L-aspartyl-[protein] + L-leucyl-tRNA(Leu) = N-terminal L-leucyl-L-aspartyl-[protein] + tRNA(Leu) + H(+). Functions in the N-end rule pathway of protein degradation where it conjugates Leu from its aminoacyl-tRNA to the N-termini of proteins containing an N-terminal aspartate or glutamate. The chain is Aspartate/glutamate leucyltransferase from Brucella abortus (strain S19).